A 360-amino-acid chain; its full sequence is Cytochrome b-c1 complex subunit 2, mitochondrial (360 aa).

A mitochondrion-targeting transit peptide spans 1 to 15; sequence MLSSRLQFAQQTARK.

The protein belongs to the peptidase M16 family. UQCRC2/QCR2 subfamily. In terms of assembly, component of the ubiquinol-cytochrome c oxidoreductase (cytochrome b-c1 complex, complex III, CIII), a multisubunit enzyme composed of 3 respiratory subunits cytochrome b, cytochrome c1 and Rieske protein, 2 core protein subunits, and additional low-molecular weight protein subunits. The complex exists as an obligatory dimer and forms supercomplexes (SCs) in the inner mitochondrial membrane with cytochrome c oxidase (complex IV, CIV).

The protein resides in the mitochondrion inner membrane. Component of the ubiquinol-cytochrome c oxidoreductase, a multisubunit transmembrane complex that is part of the mitochondrial electron transport chain which drives oxidative phosphorylation. The respiratory chain contains 3 multisubunit complexes succinate dehydrogenase (complex II, CII), ubiquinol-cytochrome c oxidoreductase (cytochrome b-c1 complex, complex III, CIII) and cytochrome c oxidase (complex IV, CIV), that cooperate to transfer electrons derived from NADH and succinate to molecular oxygen, creating an electrochemical gradient over the inner membrane that drives transmembrane transport and the ATP synthase. The cytochrome b-c1 complex catalyzes electron transfer from ubiquinol to cytochrome c, linking this redox reaction to translocation of protons across the mitochondrial inner membrane, with protons being carried across the membrane as hydrogens on the quinol. In the process called Q cycle, 2 protons are consumed from the matrix, 4 protons are released into the intermembrane space and 2 electrons are passed to cytochrome c. The protein is Cytochrome b-c1 complex subunit 2, mitochondrial (QCR2) of Kluyveromyces lactis (strain ATCC 8585 / CBS 2359 / DSM 70799 / NBRC 1267 / NRRL Y-1140 / WM37) (Yeast).